We begin with the raw amino-acid sequence, 117 residues long: Large ribosomal subunit protein bL20c (117 aa).

Belongs to the bacterial ribosomal protein bL20 family.

Its subcellular location is the plastid. It localises to the chloroplast. Binds directly to 23S ribosomal RNA and is necessary for the in vitro assembly process of the 50S ribosomal subunit. It is not involved in the protein synthesizing functions of that subunit. This Citrus sinensis (Sweet orange) protein is Large ribosomal subunit protein bL20c.